The sequence spans 206 residues: Small ribosomal subunit protein uS4 (206 aa).

The S4 RNA-binding domain maps to 96–158 (GRLDNVVYRM…AKQQTRIKAA (63 aa)).

Belongs to the universal ribosomal protein uS4 family. In terms of assembly, part of the 30S ribosomal subunit. Contacts protein S5. The interaction surface between S4 and S5 is involved in control of translational fidelity.

Its function is as follows. One of the primary rRNA binding proteins, it binds directly to 16S rRNA where it nucleates assembly of the body of the 30S subunit. Functionally, with S5 and S12 plays an important role in translational accuracy. The sequence is that of Small ribosomal subunit protein uS4 from Vibrio vulnificus (strain CMCP6).